Consider the following 270-residue polypeptide: Beta carbonic anhydrase 1 (270 aa).

Residues C39, D41, H105, and C108 each contribute to the Zn(2+) site.

Belongs to the beta-class carbonic anhydrase family. The cofactor is Zn(2+).

The enzyme catalyses hydrogencarbonate + H(+) = CO2 + H2O. Its function is as follows. Reversible hydration of carbon dioxide. The polypeptide is Beta carbonic anhydrase 1 (Caenorhabditis briggsae).